A 150-amino-acid polypeptide reads, in one-letter code: D-aminoacyl-tRNA deacylase (150 aa).

The short motif at 138–139 is the Gly-cisPro motif, important for rejection of L-amino acids element; that stretch reads GP.

This sequence belongs to the DTD family. As to quaternary structure, homodimer.

It is found in the cytoplasm. The catalysed reaction is glycyl-tRNA(Ala) + H2O = tRNA(Ala) + glycine + H(+). It catalyses the reaction a D-aminoacyl-tRNA + H2O = a tRNA + a D-alpha-amino acid + H(+). In terms of biological role, an aminoacyl-tRNA editing enzyme that deacylates mischarged D-aminoacyl-tRNAs. Also deacylates mischarged glycyl-tRNA(Ala), protecting cells against glycine mischarging by AlaRS. Acts via tRNA-based rather than protein-based catalysis; rejects L-amino acids rather than detecting D-amino acids in the active site. By recycling D-aminoacyl-tRNA to D-amino acids and free tRNA molecules, this enzyme counteracts the toxicity associated with the formation of D-aminoacyl-tRNA entities in vivo and helps enforce protein L-homochirality. This Azobacteroides pseudotrichonymphae genomovar. CFP2 protein is D-aminoacyl-tRNA deacylase.